A 397-amino-acid chain; its full sequence is MADLRLFTSESVTEGHPDKICDQISDSILDALLAVDEHSRVAVETLVTTGLVHVAGEVTTKGYVEIPALVRDTIVEIGYDSSDVSFDGTQCGVSVSIGAQSPDIAQGVDNALETRSERSQDDLDRQGAGDQGIMFGFATTETPQYMPLPIWLAHRLAERLAAVRKDGTLGYLRPDGKTQVTIGYEGYVPKSVQTVVLSTQHARDIPSQQLRADVIEQVIEPVMHAAGVETSHIRTLINPTGRFEIGGPKGDAGLTGRKIIVDTYGGASRHGGGAFSGKDPSKVDRSAAYALRWVAKNAVAAGLADRLEVQIAYAIGKAAPVGLYVETFGTAHVPDERIIHAIREVFDLRPAAIARDLDLLRPIYARTATYGHFGRELPDFTWERLDRVDDLRSAAGL.

H16 serves as a coordination point for ATP. Residue D18 coordinates Mg(2+). E44 provides a ligand contact to K(+). L-methionine-binding residues include E57 and Q100. A flexible loop region spans residues 100-110 (QSPDIAQGVDN). ATP-binding positions include 175-177 (DGK), 242-243 (RF), D251, 257-258 (RK), A274, and K278. Position 251 (D251) interacts with L-methionine. Residue K282 participates in L-methionine binding.

This sequence belongs to the AdoMet synthase family. In terms of assembly, homotetramer; dimer of dimers. Mg(2+) serves as cofactor. The cofactor is K(+).

The protein localises to the cytoplasm. It catalyses the reaction L-methionine + ATP + H2O = S-adenosyl-L-methionine + phosphate + diphosphate. It participates in amino-acid biosynthesis; S-adenosyl-L-methionine biosynthesis; S-adenosyl-L-methionine from L-methionine: step 1/1. Functionally, catalyzes the formation of S-adenosylmethionine (AdoMet) from methionine and ATP. The overall synthetic reaction is composed of two sequential steps, AdoMet formation and the subsequent tripolyphosphate hydrolysis which occurs prior to release of AdoMet from the enzyme. The chain is S-adenosylmethionine synthase from Leifsonia xyli subsp. xyli (strain CTCB07).